We begin with the raw amino-acid sequence, 860 residues long: Leucine--tRNA ligase (860 aa).

The 'HIGH' region motif lies at Pro-42–His-52. Positions Lys-619–Ser-623 match the 'KMSKS' region motif. An ATP-binding site is contributed by Lys-622.

The protein belongs to the class-I aminoacyl-tRNA synthetase family.

The protein localises to the cytoplasm. The enzyme catalyses tRNA(Leu) + L-leucine + ATP = L-leucyl-tRNA(Leu) + AMP + diphosphate. The protein is Leucine--tRNA ligase of Escherichia coli (strain 55989 / EAEC).